A 686-amino-acid chain; its full sequence is Glycine--tRNA ligase beta subunit (686 aa).

It belongs to the class-II aminoacyl-tRNA synthetase family. Tetramer of two alpha and two beta subunits.

The protein localises to the cytoplasm. The enzyme catalyses tRNA(Gly) + glycine + ATP = glycyl-tRNA(Gly) + AMP + diphosphate. The polypeptide is Glycine--tRNA ligase beta subunit (Halothermothrix orenii (strain H 168 / OCM 544 / DSM 9562)).